We begin with the raw amino-acid sequence, 253 residues long: 3-deoxy-manno-octulosonate cytidylyltransferase (253 aa).

This sequence belongs to the KdsB family.

The protein localises to the cytoplasm. The enzyme catalyses 3-deoxy-alpha-D-manno-oct-2-ulosonate + CTP = CMP-3-deoxy-beta-D-manno-octulosonate + diphosphate. The protein operates within nucleotide-sugar biosynthesis; CMP-3-deoxy-D-manno-octulosonate biosynthesis; CMP-3-deoxy-D-manno-octulosonate from 3-deoxy-D-manno-octulosonate and CTP: step 1/1. It participates in bacterial outer membrane biogenesis; lipopolysaccharide biosynthesis. In terms of biological role, activates KDO (a required 8-carbon sugar) for incorporation into bacterial lipopolysaccharide in Gram-negative bacteria. This Idiomarina loihiensis (strain ATCC BAA-735 / DSM 15497 / L2-TR) protein is 3-deoxy-manno-octulosonate cytidylyltransferase.